We begin with the raw amino-acid sequence, 269 residues long: tRNA pseudouridine synthase A (269 aa).

The active-site Nucleophile is the Asp-51. Tyr-109 is a substrate binding site.

This sequence belongs to the tRNA pseudouridine synthase TruA family. Homodimer.

It catalyses the reaction uridine(38/39/40) in tRNA = pseudouridine(38/39/40) in tRNA. Formation of pseudouridine at positions 38, 39 and 40 in the anticodon stem and loop of transfer RNAs. In Histophilus somni (strain 2336) (Haemophilus somnus), this protein is tRNA pseudouridine synthase A.